Here is a 544-residue protein sequence, read N- to C-terminus: Chaperonin GroEL (544 aa).

Residues T30 to P33, K51, D87 to T91, G415, and D495 contribute to the ATP site.

The protein belongs to the chaperonin (HSP60) family. As to quaternary structure, forms a cylinder of 14 subunits composed of two heptameric rings stacked back-to-back. Interacts with the co-chaperonin GroES.

It localises to the cytoplasm. The catalysed reaction is ATP + H2O + a folded polypeptide = ADP + phosphate + an unfolded polypeptide.. Its function is as follows. Together with its co-chaperonin GroES, plays an essential role in assisting protein folding. The GroEL-GroES system forms a nano-cage that allows encapsulation of the non-native substrate proteins and provides a physical environment optimized to promote and accelerate protein folding. This chain is Chaperonin GroEL, found in Neisseria flavescens.